The following is an 82-amino-acid chain: Small ribosomal subunit protein bS18 (82 aa).

The protein belongs to the bacterial ribosomal protein bS18 family. In terms of assembly, part of the 30S ribosomal subunit. Forms a tight heterodimer with protein bS6.

Its function is as follows. Binds as a heterodimer with protein bS6 to the central domain of the 16S rRNA, where it helps stabilize the platform of the 30S subunit. The sequence is that of Small ribosomal subunit protein bS18 from Bartonella bacilliformis (strain ATCC 35685 / KC583 / Herrer 020/F12,63).